We begin with the raw amino-acid sequence, 244 residues long: MNIDLNADVGEGCASDSELLTLVSSANIACGFHAGDAQTMLTCVREALKNGVAIGAHPSFPDRDNFGRTAMVLPPETVYAQTLYQIGALGAIVQAQGGVMRHVKPHGMLYNQAAKDPRLAQAIAKAVHDYDPSLILVGLAGSELIRAGERHRLVTRQEVFADRGYQADGSLVPRTQPGALIHDEEQALAQTLDMVQAGRVKSVTGVWTTVTAQTVCIHGDGEYALAFARRLRAAFNARNIHVIA.

The protein belongs to the LamB/PxpA family. Forms a complex composed of PxpA, PxpB and PxpC.

It catalyses the reaction 5-oxo-L-proline + ATP + 2 H2O = L-glutamate + ADP + phosphate + H(+). Catalyzes the cleavage of 5-oxoproline to form L-glutamate coupled to the hydrolysis of ATP to ADP and inorganic phosphate. This is 5-oxoprolinase subunit A from Salmonella newport (strain SL254).